A 72-amino-acid polypeptide reads, in one-letter code: Holocyclotoxin-1 (72 aa).

An N-terminal signal peptide occupies residues 1-22 (MSKVTTVFIGALVLLLLIENGF). Intrachain disulfides connect C24–C40, C32–C57, C36–C60, and C42–C70.

Expressed in salivary glands.

It localises to the secreted. Functionally, probable neurotoxin. The polypeptide is Holocyclotoxin-1 (Ixodes holocyclus (Australian paralysis tick)).